The primary structure comprises 451 residues: Phosphoglucosamine mutase (451 aa).

Ser-102 serves as the catalytic Phosphoserine intermediate. 4 residues coordinate Mg(2+): Ser-102, Asp-243, Asp-245, and Asp-247. Ser-102 carries the post-translational modification Phosphoserine.

It belongs to the phosphohexose mutase family. Mg(2+) is required as a cofactor. Activated by phosphorylation.

The catalysed reaction is alpha-D-glucosamine 1-phosphate = D-glucosamine 6-phosphate. Its function is as follows. Catalyzes the conversion of glucosamine-6-phosphate to glucosamine-1-phosphate. This is Phosphoglucosamine mutase from Brucella anthropi (strain ATCC 49188 / DSM 6882 / CCUG 24695 / JCM 21032 / LMG 3331 / NBRC 15819 / NCTC 12168 / Alc 37) (Ochrobactrum anthropi).